We begin with the raw amino-acid sequence, 288 residues long: Nucleotide-binding protein ASA_0318 (288 aa).

Position 8–15 (8–15 (GRSGSGKT)) interacts with ATP. 56–59 (DVRN) lines the GTP pocket.

The protein belongs to the RapZ-like family.

Functionally, displays ATPase and GTPase activities. This is Nucleotide-binding protein ASA_0318 from Aeromonas salmonicida (strain A449).